The primary structure comprises 1219 residues: NHS-like protein 2 (1219 aa).

10 disordered regions span residues 162 to 181, 288 to 321, 336 to 364, 400 to 423, 474 to 591, 669 to 741, 854 to 938, 979 to 1003, 1033 to 1087, and 1121 to 1197; these read FRSS…QSAK, FSNF…HSAP, FPSL…SDHP, TPSA…GNSW, GLLA…ELVL, QGSS…SASV, GAEE…STAS, IGLQ…KKPS, LEED…DKTA, and WKET…KTTN. A compositionally biased stretch (polar residues) spans 288-312; that stretch reads FSNFSQRDQGHSSSPTGSLARSATS. Residues 352–364 are compositionally biased toward basic and acidic residues; that stretch reads GDAHQARSASDHP. S499 carries the post-translational modification Phosphoserine. Residues 526–545 show a composition bias toward polar residues; sequence ASTSSEGSNSTDNIAALSTE. Basic residues predominate over residues 549–567; that stretch reads RHRRQRSKSISLKKAKKKP. S575 carries the phosphoserine modification. Residues 674–687 are compositionally biased toward low complexity; it reads SLASPSTSRATTPS. S690 carries the post-translational modification Phosphoserine. Composition is skewed to polar residues over residues 708-729 and 897-908; these read MSPS…SMSL and TSPTMAMASRSS. S1048 is subject to Phosphoserine. A compositionally biased stretch (basic and acidic residues) spans 1076 to 1087; it reads AEEKSLISDKTA. The span at 1131–1144 shows a compositional bias: polar residues; it reads SKPSSHSPVKNTAD. The span at 1145-1160 shows a compositional bias: low complexity; it reads SPTGEAAAAPGPSSSA. S1208 is modified (phosphoserine).

This sequence belongs to the NHS family.

The sequence is that of NHS-like protein 2 from Mus musculus (Mouse).